The following is an 860-amino-acid chain: Mycobactin import ATP-binding/permease protein IrtA (860 aa).

Residues 1-293 (MARGIQGVMM…GRLLAPLKTT (293 aa)) are Cytoplasmic-facing. Positions 15–124 (ARDHQATVVS…LGSAGFSVPE (110 aa)) constitute an FAD-binding FR-type domain. FAD-binding positions include 70–73 (RAYT), 87–91 (DVVLH), 97–98 (AS), and 238–240 (TEG). A disordered region spans residues 242-275 (AMGTKRGDDDKTPEVNPAPRADKPEAPAPAAAGR). A helical membrane pass occupies residues 294–314 (LIISGVLQAIITLVQLAPFVL). The ABC transmembrane type-1 domain occupies 295 to 577 (IISGVLQAII…IAYGLGGIRG (283 aa)). The Periplasmic segment spans residues 315–335 (LVELARLLLSGASSDRLWTLG). A helical membrane pass occupies residues 336–356 (VVAISLLGTGSFLAAALTLWL). The Cytoplasmic portion of the chain corresponds to 357-409 (HLVDARFARDLRTGLLTKMSRLPLGWFTARGSGSIKQLVQDDTLSLHYLITHA). A helical transmembrane segment spans residues 410-430 (IPDAVAAVIAPVAVLVYLFVV). The Periplasmic portion of the chain corresponds to 431 to 433 (DWR). Residues 434 to 454 (LALVMFVPVLIYLVLMTVMTI) form a helical membrane-spanning segment. Residues 455-525 (QSGPKIAQSQ…KKSMMDLVTR (71 aa)) are Cytoplasmic-facing. Residues 526-546 (PGTFLWLIVAVGTPMITSGAM) traverse the membrane as a helical segment. Residues 547–550 (DPVD) lie on the Periplasmic side of the membrane. Residues 551-571 (ILPFLLLGTTFGVRLLGIAYG) form a helical membrane-spanning segment. Residues 572-860 (LGGIRGGMLA…AAGPTGEAVR (289 aa)) are Cytoplasmic-facing. The ABC transporter domain occupies 609 to 842 (VVFDNVTFGY…AGRYRQLWET (234 aa)). 642 to 649 (GPSGSGKS) is an ATP binding site.

It belongs to the ABC transporter superfamily. Siderophore-Fe(3+) uptake transporter (SIUT) (TC 3.A.1.21) family. Forms a heterodimer with IrtB. FAD is required as a cofactor.

The protein resides in the cell inner membrane. Its function is as follows. Part of the ABC transporter complex IrtAB involved in the import of iron-bound mycobactin (Fe-MBT) and carboxymycobactin (Fe-cMBT). Has a preference for Fe-MBT over Fe-cMBT. Mycobactins are then reduced by the siderophore interaction domain to facilitate iron release in the bacterial cell. Transmembrane domains (TMD) form a pore in the membrane and the ATP-binding domain (NBD) is responsible for energy generation. The protein is Mycobactin import ATP-binding/permease protein IrtA of Mycolicibacterium smegmatis (strain ATCC 700084 / mc(2)155) (Mycobacterium smegmatis).